The chain runs to 198 residues: Glycerol-3-phosphate acyltransferase (198 aa).

The next 5 helical transmembrane spans lie at 10-30 (LIPI…WILV), 57-77 (GISF…ILIL), 86-106 (IMYL…WFLF), 118-138 (VVLS…AVVF), and 160-180 (AVTE…IVLI).

Belongs to the PlsY family. Probably interacts with PlsX.

Its subcellular location is the cell inner membrane. The catalysed reaction is an acyl phosphate + sn-glycerol 3-phosphate = a 1-acyl-sn-glycero-3-phosphate + phosphate. It participates in lipid metabolism; phospholipid metabolism. In terms of biological role, catalyzes the transfer of an acyl group from acyl-phosphate (acyl-PO(4)) to glycerol-3-phosphate (G3P) to form lysophosphatidic acid (LPA). This enzyme utilizes acyl-phosphate as fatty acyl donor, but not acyl-CoA or acyl-ACP. This Anaplasma marginale (strain St. Maries) protein is Glycerol-3-phosphate acyltransferase.